The following is a 158-amino-acid chain: uncharacterized protein (158 aa).

An N-terminal signal peptide occupies residues 1–19; that stretch reads MQKLLLAVLFFSLLAIATA. The disordered stretch occupies residues 82–158; the sequence is ANPKAEAEPG…VYENDDENEE (77 aa). A compositionally biased stretch (basic and acidic residues) spans 84-107; it reads PKAEAEPGSLDKEAGTKGEKEKNG. Positions 141–158 are enriched in acidic residues; it reads DDDDDHDDVYENDDENEE.

Prismatic layer of shell (at protein level). Expressed primarily in the mantle with highest level in the mantle edge and lower level in the mantle pallium.

The protein localises to the secreted. This is an uncharacterized protein from Pinctada maxima (Silver-lipped pearl oyster).